The chain runs to 208 residues: uncharacterized protein (208 aa).

The N-terminal stretch at 1–16 (MKFLLIACLAVPAILA) is a signal peptide. A glycan (N-linked (GlcNAc...) asparagine) is linked at asparagine 79.

This is an uncharacterized protein from Caenorhabditis elegans.